A 221-amino-acid chain; its full sequence is UPF0758 protein Ent638_0101 (221 aa).

Residues 99–221 (PLLSPEMTKD…YVSFAEQGWI (123 aa)) enclose the MPN domain. H170, H172, and D183 together coordinate Zn(2+). A JAMM motif motif is present at residues 170-183 (HNHPSGCAEPSKAD).

This sequence belongs to the UPF0758 family. YicR subfamily.

This Enterobacter sp. (strain 638) protein is UPF0758 protein Ent638_0101.